We begin with the raw amino-acid sequence, 148 residues long: Lysozyme C (148 aa).

The signal sequence occupies residues 1–18 (MKAVIILGLVLLSVTVQG). The 130-residue stretch at 19 to 148 (KIFERCELAR…VSQYVQGCGV (130 aa)) folds into the C-type lysozyme domain. Intrachain disulfides connect Cys-24/Cys-146, Cys-48/Cys-134, Cys-83/Cys-99, and Cys-95/Cys-113. Active-site residues include Glu-53 and Asp-71.

Belongs to the glycosyl hydrolase 22 family. In terms of assembly, monomer.

It catalyses the reaction Hydrolysis of (1-&gt;4)-beta-linkages between N-acetylmuramic acid and N-acetyl-D-glucosamine residues in a peptidoglycan and between N-acetyl-D-glucosamine residues in chitodextrins.. In terms of biological role, lysozymes have primarily a bacteriolytic function; those in tissues and body fluids are associated with the monocyte-macrophage system and enhance the activity of immunoagents. The polypeptide is Lysozyme C (LYZ) (Allenopithecus nigroviridis (Allen's swamp monkey)).